We begin with the raw amino-acid sequence, 217 residues long: Ras-related protein RABA1f (217 aa).

GTP is bound at residue 20 to 27; the sequence is GDSGVGKS. The short motif at 42-50 is the Effector region element; the sequence is SKSTIGVEF. Residues 68–72, 126–129, and 156–157 contribute to the GTP site; these read DTAGQ, NKAD, and SA. 2 S-geranylgeranyl cysteine lipidation sites follow: cysteine 214 and cysteine 215.

Belongs to the small GTPase superfamily. Rab family.

It is found in the cell membrane. Its function is as follows. Intracellular vesicle trafficking and protein transport. The polypeptide is Ras-related protein RABA1f (RABA1F) (Arabidopsis thaliana (Mouse-ear cress)).